Reading from the N-terminus, the 123-residue chain is Immunoglobulin heavy variable 4-34 (123 aa).

An N-terminal signal peptide occupies residues 1 to 26; the sequence is MDLLHKNMKHLWFFLLLVAAPRWVLS. Residues 26–123 are v region; the sequence is SQVQLQQWGA…ADTAVYYCAR (98 aa). Residues 27-51 are framework-1; that stretch reads QVQLQQWGAGLLKPSETLSLTCAVY. Positions 27–123 constitute an Ig-like domain; it reads QVQLQQWGAG…ADTAVYYCAR (97 aa). Cys-48 and Cys-121 form a disulfide bridge. Residues 52–59 form a complementarity-determining-1 region; sequence GGSFSGYY. Residues 60-76 are framework-2; sequence WSWIRQPPGKGLEWIGE. Residues 77–83 are complementarity-determining-2; that stretch reads INHSGST. N-linked (GlcNAc...) asparagine glycosylation is present at Asn-78. Positions 84 to 121 are framework-3; it reads NYNPSLKSRVTISVDTSKNQFSLKLSSVTAADTAVYYC. The tract at residues 122–123 is complementarity-determining-3; that stretch reads AR.

Immunoglobulins are composed of two identical heavy chains and two identical light chains; disulfide-linked.

The protein localises to the secreted. It localises to the cell membrane. V region of the variable domain of immunoglobulin heavy chains that participates in the antigen recognition. Immunoglobulins, also known as antibodies, are membrane-bound or secreted glycoproteins produced by B lymphocytes. In the recognition phase of humoral immunity, the membrane-bound immunoglobulins serve as receptors which, upon binding of a specific antigen, trigger the clonal expansion and differentiation of B lymphocytes into immunoglobulins-secreting plasma cells. Secreted immunoglobulins mediate the effector phase of humoral immunity, which results in the elimination of bound antigens. The antigen binding site is formed by the variable domain of one heavy chain, together with that of its associated light chain. Thus, each immunoglobulin has two antigen binding sites with remarkable affinity for a particular antigen. The variable domains are assembled by a process called V-(D)-J rearrangement and can then be subjected to somatic hypermutations which, after exposure to antigen and selection, allow affinity maturation for a particular antigen. This Homo sapiens (Human) protein is Immunoglobulin heavy variable 4-34.